The following is a 260-amino-acid chain: Beta-lactamase SHV-6 (260 aa).

The signal sequence occupies residues 1 to 11 (LLATLPLAVHA). Serine 56 acts as the Acyl-ester intermediate in catalysis. Cysteine 63 and cysteine 109 form a disulfide bridge. The active-site Proton acceptor is glutamate 154. 220 to 222 (KTG) provides a ligand contact to substrate.

It belongs to the class-A beta-lactamase family.

It carries out the reaction a beta-lactam + H2O = a substituted beta-amino acid. SHV enzymes hydrolyze broad spectrum cephalosporins notably cefotaxime and ceftazidime. This chain is Beta-lactamase SHV-6 (bla), found in Klebsiella pneumoniae.